Consider the following 410-residue polypeptide: Cytosolic isocitrate dehydrogenase [NADP] (410 aa).

Residues 77-79 and R84 each bind NADP(+); that span reads TIT. Position 79 (T79) interacts with substrate. Substrate-binding positions include 96 to 102, R111, and R134; that span reads SPNGTIR. NADP(+) is bound at residue K260. Mn(2+) is bound by residues D275 and D279. Residues 310–315 and N328 each bind NADP(+); that span reads GTVTRH.

Belongs to the isocitrate and isopropylmalate dehydrogenases family. It depends on Mg(2+) as a cofactor. Mn(2+) serves as cofactor.

It localises to the cytoplasm. Its subcellular location is the cytosol. The enzyme catalyses D-threo-isocitrate + NADP(+) = 2-oxoglutarate + CO2 + NADPH. Functionally, may supply 2-oxoglutarate for amino acid biosynthesis and ammonia assimilation via the glutamine synthetase/glutamate synthase (GS/GOGAT) pathway. May be involved in the production of NADPH to promote redox signaling or homeostasis in response to oxidative stress, or redox signaling linked to defense responses. In Arabidopsis thaliana (Mouse-ear cress), this protein is Cytosolic isocitrate dehydrogenase [NADP].